Reading from the N-terminus, the 64-residue chain is Thrombin-like enzyme collinein-4 (64 aa).

2 cysteine pairs are disulfide-bonded: cysteine 5/cysteine 23 and cysteine 34/cysteine 51.

As to quaternary structure, monomer. As to expression, expressed by the vanom gland.

The protein resides in the secreted. Thrombin-like snake venom serine protease. The polypeptide is Thrombin-like enzyme collinein-4 (Crotalus durissus collilineatus (Brazilian rattlesnake)).